The sequence spans 1011 residues: Phosphoenolpyruvate carboxylase (1011 aa).

Residues His207 and Lys658 contribute to the active site.

It belongs to the PEPCase type 1 family. Requires Mg(2+) as cofactor.

It catalyses the reaction oxaloacetate + phosphate = phosphoenolpyruvate + hydrogencarbonate. In terms of biological role, forms oxaloacetate, a four-carbon dicarboxylic acid source for the tricarboxylic acid cycle. The polypeptide is Phosphoenolpyruvate carboxylase (ppc) (Thermosynechococcus vestitus (strain NIES-2133 / IAM M-273 / BP-1)).